Reading from the N-terminus, the 97-residue chain is UPF0729 protein AAEL015238 (97 aa).

Residues 69–97 (EVAASGSGSNGTATAVGSEGEAEETKKSQ) form a disordered region. A compositionally biased stretch (polar residues) spans 74-83 (GSGSNGTATA).

This sequence belongs to the UPF0729 family.

This chain is UPF0729 protein AAEL015238, found in Aedes aegypti (Yellowfever mosquito).